Consider the following 365-residue polypeptide: Tartrate dehydrogenase/decarboxylase (365 aa).

The Mn(2+) site is built by aspartate 225, aspartate 250, and aspartate 254.

Belongs to the isocitrate and isopropylmalate dehydrogenases family. In terms of assembly, homodimer. Requires Mg(2+) as cofactor. The cofactor is Mn(2+). It depends on K(+) as a cofactor.

It is found in the cytoplasm. The enzyme catalyses tartrate + NAD(+) = 2-hydroxy-3-oxosuccinate + NADH + H(+). The catalysed reaction is (2R,3S)-tartrate + NAD(+) = 2-hydroxy-3-oxosuccinate + NADH + H(+). It catalyses the reaction (2R,3R)-tartrate + NAD(+) = 2-hydroxy-3-oxosuccinate + NADH + H(+). It carries out the reaction (2R,3R)-tartrate + H(+) = (R)-glycerate + CO2. The enzyme catalyses (R)-malate + NAD(+) = pyruvate + CO2 + NADH. It functions in the pathway carbohydrate acid metabolism; tartrate degradation; 2-hydroxy-3-oxosuccinate from L-tartrate: step 1/1. Its pathway is carbohydrate acid metabolism; tartrate degradation; 2-hydroxy-3-oxosuccinate from meso-tartrate: step 1/1. The protein operates within carbohydrate acid metabolism; tartrate degradation; D-glycerate from L-tartrate: step 1/1. In terms of biological role, has multiple catalytic activities. Apart from catalyzing the oxidation of (+)-tartrate to oxaloglycolate, also converts meso-tartrate to D-glycerate and catalyzes the oxidative decarboxylation of D-malate to pyruvate. The polypeptide is Tartrate dehydrogenase/decarboxylase (Pseudomonas putida (Arthrobacter siderocapsulatus)).